A 228-amino-acid chain; its full sequence is Putative N-acetylmannosamine-6-phosphate 2-epimerase (228 aa).

Belongs to the NanE family.

It catalyses the reaction an N-acyl-D-glucosamine 6-phosphate = an N-acyl-D-mannosamine 6-phosphate. Its pathway is amino-sugar metabolism; N-acetylneuraminate degradation; D-fructose 6-phosphate from N-acetylneuraminate: step 3/5. Functionally, converts N-acetylmannosamine-6-phosphate (ManNAc-6-P) to N-acetylglucosamine-6-phosphate (GlcNAc-6-P). In Mycoplasmopsis pulmonis (strain UAB CTIP) (Mycoplasma pulmonis), this protein is Putative N-acetylmannosamine-6-phosphate 2-epimerase.